The primary structure comprises 493 residues: MAAVTGPSFWLGNETLKVPVALFALNRQRLCERLRKNPAVQAGSIVVLQGGEETLRYCTDTEVLFRQESFFHWAFGVTEPGCYGVIDVDTGKSTLFVPRLPASYATWMGKIHSKEHFKEKYAMDDVQYTDEIDSVLTSQKPSVLLTLRGVNTDSGSVCREASFDGISKFEVNNTILHPEIVECRVFKTDMELEVLRYTNKISSEAHREVMKAVKVGMKEYELESLFEHYCYSRGGMRHSSYTCICGSGENSAVLHYGHAGAPNDRTIQNGDMCLFDMGGEYYCFASDITCSFPANGKFTADQKAVYEAVLRSSRAVMGAMKPGVWWPDMRRLADRIHLEELAHTGILSGSVDAMVQAHLGAVSMPHGLGHFLGIDVHDVGGYPEGVERIDEPGLRSLRTARHLQPGMVLTVEPGIYFIDHLLDEALADPAHACFFNREVLQRFRGFGGVRIEEDVVVTDSGMELLTCVPRTVEEIEACMAGCDKAFTPFSGPK.

The residue at position 2 (Ala2) is an N-acetylalanine. Residue Ser167 is modified to Phosphoserine. An a dipeptide-binding site is contributed by His255. Positions 276, 287, and 370 each coordinate Mn(2+). An a dipeptide-binding site is contributed by Asp287. A dipeptide is bound by residues His377 and Arg398. Positions 412 and 452 each coordinate Mn(2+).

This sequence belongs to the peptidase M24B family. Eukaryotic-type prolidase subfamily. Homodimer. Mn(2+) serves as cofactor.

The enzyme catalyses Xaa-L-Pro dipeptide + H2O = an L-alpha-amino acid + L-proline. Its function is as follows. Dipeptidase that catalyzes the hydrolysis of dipeptides with a prolyl (Xaa-Pro) or hydroxyprolyl residue in the C-terminal position. The preferred dipeptide substrate is Gly-Pro, but other Xaa-Pro dipeptides, such as Ala-Pro, Met-Pro, Phe-Pro, Val-Pro and Leu-Pro, can be cleaved. Plays an important role in collagen metabolism because the high level of iminoacids in collagen. In Pongo abelii (Sumatran orangutan), this protein is Xaa-Pro dipeptidase (PEPD).